The sequence spans 86 residues: Small ribosomal subunit protein bS16 (86 aa).

Belongs to the bacterial ribosomal protein bS16 family.

The chain is Small ribosomal subunit protein bS16 from Bordetella bronchiseptica (strain ATCC BAA-588 / NCTC 13252 / RB50) (Alcaligenes bronchisepticus).